We begin with the raw amino-acid sequence, 100 residues long: Aspartyl/glutamyl-tRNA(Asn/Gln) amidotransferase subunit C (100 aa).

This sequence belongs to the GatC family. In terms of assembly, heterotrimer of A, B and C subunits.

The catalysed reaction is L-glutamyl-tRNA(Gln) + L-glutamine + ATP + H2O = L-glutaminyl-tRNA(Gln) + L-glutamate + ADP + phosphate + H(+). The enzyme catalyses L-aspartyl-tRNA(Asn) + L-glutamine + ATP + H2O = L-asparaginyl-tRNA(Asn) + L-glutamate + ADP + phosphate + 2 H(+). Its function is as follows. Allows the formation of correctly charged Asn-tRNA(Asn) or Gln-tRNA(Gln) through the transamidation of misacylated Asp-tRNA(Asn) or Glu-tRNA(Gln) in organisms which lack either or both of asparaginyl-tRNA or glutaminyl-tRNA synthetases. The reaction takes place in the presence of glutamine and ATP through an activated phospho-Asp-tRNA(Asn) or phospho-Glu-tRNA(Gln). This chain is Aspartyl/glutamyl-tRNA(Asn/Gln) amidotransferase subunit C, found in Staphylococcus haemolyticus (strain JCSC1435).